Consider the following 162-residue polypeptide: Phosphopantetheine adenylyltransferase (162 aa).

S9 is a substrate binding site. Residues 9–10 and H17 each bind ATP; that span reads SF. Residues K41, L77, and K91 each coordinate substrate. ATP is bound by residues 92 to 94, E102, and 126 to 132; these read GLR and YAFLSSS.

This sequence belongs to the bacterial CoaD family. As to quaternary structure, homohexamer. Mg(2+) serves as cofactor.

It is found in the cytoplasm. It catalyses the reaction (R)-4'-phosphopantetheine + ATP + H(+) = 3'-dephospho-CoA + diphosphate. It participates in cofactor biosynthesis; coenzyme A biosynthesis; CoA from (R)-pantothenate: step 4/5. Its function is as follows. Reversibly transfers an adenylyl group from ATP to 4'-phosphopantetheine, yielding dephospho-CoA (dPCoA) and pyrophosphate. This chain is Phosphopantetheine adenylyltransferase, found in Parafrankia sp. (strain EAN1pec).